The chain runs to 288 residues: Formamidopyrimidine-DNA glycosylase (288 aa).

Residue Pro-2 is the Schiff-base intermediate with DNA of the active site. Catalysis depends on Glu-3, which acts as the Proton donor. The Proton donor; for beta-elimination activity role is filled by Lys-58. The DNA site is built by His-99, Arg-118, and Lys-161. The FPG-type zinc finger occupies 252 to 288 (RVYDREAEPCPREGCGGTIKRIVQAGRSTFFCAKCQR). The active-site Proton donor; for delta-elimination activity is Arg-278.

It belongs to the FPG family. As to quaternary structure, monomer. Requires Zn(2+) as cofactor.

The enzyme catalyses Hydrolysis of DNA containing ring-opened 7-methylguanine residues, releasing 2,6-diamino-4-hydroxy-5-(N-methyl)formamidopyrimidine.. The catalysed reaction is 2'-deoxyribonucleotide-(2'-deoxyribose 5'-phosphate)-2'-deoxyribonucleotide-DNA = a 3'-end 2'-deoxyribonucleotide-(2,3-dehydro-2,3-deoxyribose 5'-phosphate)-DNA + a 5'-end 5'-phospho-2'-deoxyribonucleoside-DNA + H(+). Functionally, involved in base excision repair of DNA damaged by oxidation or by mutagenic agents. Acts as a DNA glycosylase that recognizes and removes damaged bases. Has a preference for oxidized purines, such as 7,8-dihydro-8-oxoguanine (8-oxoG). Has AP (apurinic/apyrimidinic) lyase activity and introduces nicks in the DNA strand. Cleaves the DNA backbone by beta-delta elimination to generate a single-strand break at the site of the removed base with both 3'- and 5'-phosphates. The sequence is that of Formamidopyrimidine-DNA glycosylase from Beijerinckia indica subsp. indica (strain ATCC 9039 / DSM 1715 / NCIMB 8712).